The primary structure comprises 1137 residues: AP-4 complex subunit epsilon-1 (1137 aa).

Residues serine 700 and serine 857 each carry the phosphoserine modification. The interval serine 727 to serine 1137 is interaction with TEPSIN.

It belongs to the adaptor complexes large subunit family. Adaptor protein complex 4 (AP-4) is a heterotetramer composed of two large adaptins (epsilon-type subunit AP4E1 and beta-type subunit AP4B1), a medium adaptin (mu-type subunit AP4M1) and a small adaptin (sigma-type AP4S1). Interacts with TEPSIN. Interacts with GRIA2; probably indirect it mediates the somatodendritic localization of GRIA2 in neurons. As to expression, widely expressed.

It is found in the golgi apparatus. Its subcellular location is the trans-Golgi network membrane. Functionally, component of the adaptor protein complex 4 (AP-4). Adaptor protein complexes are vesicle coat components involved both in vesicle formation and cargo selection. They control the vesicular transport of proteins in different trafficking pathways. AP-4 forms a non clathrin-associated coat on vesicles departing the trans-Golgi network (TGN) and may be involved in the targeting of proteins from the trans-Golgi network (TGN) to the endosomal-lysosomal system. It is also involved in protein sorting to the basolateral membrane in epithelial cells and the proper asymmetric localization of somatodendritic proteins in neurons. AP-4 is involved in the recognition and binding of tyrosine-based sorting signals found in the cytoplasmic part of cargos, but may also recognize other types of sorting signal. This chain is AP-4 complex subunit epsilon-1, found in Homo sapiens (Human).